Consider the following 549-residue polypeptide: Glucose-6-phosphate isomerase (549 aa).

E355 serves as the catalytic Proton donor. Catalysis depends on residues H387 and K515.

The protein belongs to the GPI family.

It is found in the cytoplasm. It catalyses the reaction alpha-D-glucose 6-phosphate = beta-D-fructose 6-phosphate. It functions in the pathway carbohydrate biosynthesis; gluconeogenesis. The protein operates within carbohydrate degradation; glycolysis; D-glyceraldehyde 3-phosphate and glycerone phosphate from D-glucose: step 2/4. Catalyzes the reversible isomerization of glucose-6-phosphate to fructose-6-phosphate. The chain is Glucose-6-phosphate isomerase from Haemophilus influenzae (strain 86-028NP).